A 452-amino-acid polypeptide reads, in one-letter code: Tubulin alpha-6 chain (452 aa).

The GTP site is built by glutamine 11, glutamate 69, serine 138, glycine 142, threonine 143, threonine 177, asparagine 204, and asparagine 226. Residue glutamate 69 coordinates Mg(2+). Residue glutamate 252 is part of the active site.

It belongs to the tubulin family. As to quaternary structure, dimer of alpha and beta chains. A typical microtubule is a hollow water-filled tube with an outer diameter of 25 nm and an inner diameter of 15 nM. Alpha-beta heterodimers associate head-to-tail to form protofilaments running lengthwise along the microtubule wall with the beta-tubulin subunit facing the microtubule plus end conferring a structural polarity. Microtubules usually have 13 protofilaments but different protofilament numbers can be found in some organisms and specialized cells. Requires Mg(2+) as cofactor.

It localises to the cytoplasm. The protein resides in the cytoskeleton. It is found in the spindle. The catalysed reaction is GTP + H2O = GDP + phosphate + H(+). Tubulin is the major constituent of microtubules, a cylinder consisting of laterally associated linear protofilaments composed of alpha- and beta-tubulin heterodimers. Microtubules grow by the addition of GTP-tubulin dimers to the microtubule end, where a stabilizing cap forms. Below the cap, tubulin dimers are in GDP-bound state, owing to GTPase activity of alpha-tubulin. This chain is Tubulin alpha-6 chain (TUBA6), found in Naegleria pringsheimi (Amoeba).